Here is a 194-residue protein sequence, read N- to C-terminus: Coiled-coil domain-containing protein 184 (194 aa).

Positions 39 to 68 (GMKELMEHLKAQLQALFEDVRAMRGALDEQ) form a coiled coil. The tract at residues 101–176 (GLGVVGGKGS…LLGGDGPLVE (76 aa)) is disordered. Over residues 135-145 (PEDEEEEEEEK) the composition is skewed to acidic residues.

In Homo sapiens (Human), this protein is Coiled-coil domain-containing protein 184 (CCDC184).